Here is a 56-residue protein sequence, read N- to C-terminus: Large ribosomal subunit protein bL33 (56 aa).

This sequence belongs to the bacterial ribosomal protein bL33 family.

The protein is Large ribosomal subunit protein bL33 of Orientia tsutsugamushi (strain Ikeda) (Rickettsia tsutsugamushi).